Reading from the N-terminus, the 96-residue chain is Cathelin (96 aa).

Q1 carries the pyrrolidone carboxylic acid modification. The interval 31 to 50 (DQPPKADEDPGTPKPVSFTV) is disordered. 2 cysteine pairs are disulfide-bonded: C55-C66 and C73-C90.

It belongs to the cathelicidin family.

Its subcellular location is the secreted. Functionally, probably a microbicidal peptide. This is Cathelin from Sus scrofa (Pig).